Consider the following 117-residue polypeptide: Gamma-aminobutyric acid receptor-associated protein-like 1 (117 aa).

Residue Gly116 is the site of Phosphatidylethanolamine amidated glycine; alternate attachment. Gly116 carries the Phosphatidylserine amidated glycine; alternate lipid modification. A propeptide (removed in mature form) is located at residue Lys117.

Belongs to the ATG8 family. In terms of assembly, interacts with ATG13, OPRK1, RB1CC1 and ULK1. Interacts with TP53INP1 and TP53INP2. Directly interacts with SQSTM1. Interacts with ATG3, ATG7 and MAP15. Interacts with TECPR2. Interacts with TBC1D5. Interacts with MAPK15. Interacts with TRIM5. Interacts with MEFV and TRIM21. Interacts with WDFY3. Interacts with the reticulophagy receptor TEX264. Interacts with UBA5. Interacts with KBTBD6 and KBTBD7; the interaction is direct. Interacts with reticulophagy regulators RETREG1, RETREG2 and RETREG3. Interacts with IRGM. Interacts with DNM2. Interacts with NCOA4 (via C-terminus). Post-translationally, the precursor molecule is cleaved by ATG4 (ATG4A, ATG4B, ATG4C or ATG4D) to expose the glycine at the C-terminus and form the cytosolic form, GABARAPL1-I. The processed form is then activated by APG7L/ATG7, transferred to ATG3 and conjugated to phosphatidylethanolamine (PE) phospholipid to form the membrane-bound form, GABARAPL1-II. During non-canonical autophagy, the processed form is conjugated to phosphatidylserine (PS) phospholipid. ATG4 proteins also mediate the delipidation of PE-conjugated forms required for GABARAPL1 recycling when autophagosomes fuse with lysosomes. In addition, ATG4B and ATG4D mediate delipidation of ATG8 proteins conjugated to PS during non-canonical autophagy. ATG4B constitutes the major protein for proteolytic activation. ATG4D is the main enzyme for delipidation activity.

The protein resides in the cytoplasmic vesicle. It is found in the autophagosome. The protein localises to the cytoplasmic vesicle membrane. Its subcellular location is the cytoplasm. It localises to the cytoskeleton. The protein resides in the endoplasmic reticulum. It is found in the golgi apparatus. Ubiquitin-like modifier that increases cell-surface expression of kappa-type opioid receptor through facilitating anterograde intracellular trafficking of the receptor. Involved in formation of autophagosomal vacuoles. While LC3s are involved in elongation of the phagophore membrane, the GABARAP/GATE-16 subfamily is essential for a later stage in autophagosome maturation. Through its interaction with the reticulophagy receptor TEX264, participates in the remodeling of subdomains of the endoplasmic reticulum into autophagosomes upon nutrient stress, which then fuse with lysosomes for endoplasmic reticulum turnover. The protein is Gamma-aminobutyric acid receptor-associated protein-like 1 of Pongo abelii (Sumatran orangutan).